The primary structure comprises 248 residues: Isoprenyl transferase (248 aa).

Asp-23 is a catalytic residue. Asp-23 provides a ligand contact to Mg(2+). Residues 24-27, Trp-28, Arg-36, His-40, and 68-70 contribute to the substrate site; these read GNGR and STE. Asn-71 acts as the Proton acceptor in catalysis. Substrate is bound by residues Trp-72, Arg-74, Arg-185, and 191 to 193; that span reads RIS. Glu-204 lines the Mg(2+) pocket.

Belongs to the UPP synthase family. In terms of assembly, homodimer. Requires Mg(2+) as cofactor.

Catalyzes the condensation of isopentenyl diphosphate (IPP) with allylic pyrophosphates generating different type of terpenoids. This is Isoprenyl transferase from Neisseria gonorrhoeae (strain ATCC 700825 / FA 1090).